Reading from the N-terminus, the 422-residue chain is MNSSHSFNQTYSASVHSLGSTRGRQGSCHRAPSVHGGAGGVRISLSFTTPGCLPPGGSWGSGRSSPLLGGNGKATMQNLNDRLATYLEKVRALEEANSKLETRILRWHQEREPSHRKDYSQYEENISRLQEQIVDGKMANAHIVVLIDNARMAVDDFNLKFENEHSLKKDLEIEVEGLRKTLDDLTIVTTDLEQEVEGMRKELILMKKRHEQEMEENHLPSDFKVSVKVDTTPGEDLIKVLEDMRQEYELIIKKKHQELDTWFREQSAAMAQEVASPAPVQGNQSDIHELRRTFQALEIDLQAQHSRKTALENMLTETRARYSCRLQDMQQIISHYEEELIQLRQDLERQNNEHKVLLGIKTHLEKEIATYRRLLEGDTEGTMDGSESRLKGSEASTIKAITQESVNGRIVLSQVNEIQKHI.

A compositionally biased stretch (polar residues) spans 1-24; sequence MNSSHSFNQTYSASVHSLGSTRGR. The tract at residues 1 to 35 is disordered; sequence MNSSHSFNQTYSASVHSLGSTRGRQGSCHRAPSVH. Residues 1–71 are head; that stretch reads MNSSHSFNQT…GRSSPLLGGN (71 aa). The segment at 72-107 is coil 1A; that stretch reads GKATMQNLNDRLATYLEKVRALEEANSKLETRILRW. The region spanning 72 to 382 is the IF rod domain; sequence GKATMQNLND…RLLEGDTEGT (311 aa). Residues 108–125 form a linker 1 region; sequence HQEREPSHRKDYSQYEEN. The interval 126 to 217 is coil 1B; it reads ISRLQEQIVD…KRHEQEMEEN (92 aa). Positions 218–240 are linker 12; the sequence is HLPSDFKVSVKVDTTPGEDLIKV. The tract at residues 241-378 is coil 2; the sequence is LEDMRQEYEL…ATYRRLLEGD (138 aa). The segment at 379–422 is rod-like helical tail; the sequence is TEGTMDGSESRLKGSEASTIKAITQESVNGRIVLSQVNEIQKHI.

This sequence belongs to the intermediate filament family. Heterotetramer of two type I and two type II keratins.

The sequence is that of Keratin, type I cytoskeletal 23 (Krt23) from Mus musculus (Mouse).